The chain runs to 68 residues: TxMMSK-03 (68 aa).

Positions 1–19 (MSKLGALLIICLLLFPLTA) are cleaved as a signal peptide. Positions 20–50 (VPMDGDQPADRPAERMQDDISFEQHPMFDAT) are excised as a propeptide. Intrachain disulfides connect Cys53–Cys67, Cys54–Cys63, and Cys59–Cys66. At Pro65 the chain carries 4-hydroxyproline; partial.

Post-translationally, contains 3 disulfide bonds. As to expression, expressed by the venom duct. Both hydroxylated and non-hydroxylated forms are mostly and only present in part 2 (proximal of the venom bulb) of the venom duct, respectively.

The protein localises to the secreted. The chain is TxMMSK-03 from Conus textile (Cloth-of-gold cone).